The following is a 215-amino-acid chain: ATP phosphoribosyltransferase (215 aa).

This sequence belongs to the ATP phosphoribosyltransferase family. Short subfamily. In terms of assembly, heteromultimer composed of HisG and HisZ subunits.

It is found in the cytoplasm. It catalyses the reaction 1-(5-phospho-beta-D-ribosyl)-ATP + diphosphate = 5-phospho-alpha-D-ribose 1-diphosphate + ATP. It participates in amino-acid biosynthesis; L-histidine biosynthesis; L-histidine from 5-phospho-alpha-D-ribose 1-diphosphate: step 1/9. Its function is as follows. Catalyzes the condensation of ATP and 5-phosphoribose 1-diphosphate to form N'-(5'-phosphoribosyl)-ATP (PR-ATP). Has a crucial role in the pathway because the rate of histidine biosynthesis seems to be controlled primarily by regulation of HisG enzymatic activity. This is ATP phosphoribosyltransferase from Prochlorococcus marinus subsp. pastoris (strain CCMP1986 / NIES-2087 / MED4).